Reading from the N-terminus, the 146-residue chain is Large ribosomal subunit protein uL15 (146 aa).

Positions 1 to 64 (MQLNTIKPAI…MPMHRRLPKR (64 aa)) are disordered. Over residues 30 to 39 (TATKGHKGQK) the composition is skewed to basic residues.

This sequence belongs to the universal ribosomal protein uL15 family. Part of the 50S ribosomal subunit.

Binds to the 23S rRNA. The polypeptide is Large ribosomal subunit protein uL15 (Geobacter sp. (strain M21)).